The chain runs to 283 residues: Acetylglutamate kinase (283 aa).

Substrate-binding positions include glycine 63 to glycine 64, arginine 85, and asparagine 178.

Belongs to the acetylglutamate kinase family. ArgB subfamily.

It localises to the cytoplasm. The enzyme catalyses N-acetyl-L-glutamate + ATP = N-acetyl-L-glutamyl 5-phosphate + ADP. Its pathway is amino-acid biosynthesis; L-arginine biosynthesis; N(2)-acetyl-L-ornithine from L-glutamate: step 2/4. Its function is as follows. Catalyzes the ATP-dependent phosphorylation of N-acetyl-L-glutamate. The protein is Acetylglutamate kinase of Prochlorococcus marinus (strain MIT 9301).